A 468-amino-acid polypeptide reads, in one-letter code: Adenosylhomocysteinase (468 aa).

The substrate site is built by threonine 57, aspartate 132, and glutamate 194. 195–197 is an NAD(+) binding site; the sequence is TTT. Substrate is bound by residues lysine 224 and aspartate 228. Residues asparagine 229, 258 to 263, glutamate 281, asparagine 316, 337 to 339, and asparagine 382 contribute to the NAD(+) site; these read GFGDVG and IGH.

The protein belongs to the adenosylhomocysteinase family. Requires NAD(+) as cofactor.

Its subcellular location is the cytoplasm. The catalysed reaction is S-adenosyl-L-homocysteine + H2O = L-homocysteine + adenosine. The protein operates within amino-acid biosynthesis; L-homocysteine biosynthesis; L-homocysteine from S-adenosyl-L-homocysteine: step 1/1. Functionally, may play a key role in the regulation of the intracellular concentration of adenosylhomocysteine. The polypeptide is Adenosylhomocysteinase (Methylorubrum extorquens (strain CM4 / NCIMB 13688) (Methylobacterium extorquens)).